A 421-amino-acid chain; its full sequence is Replication factor C large subunit (421 aa).

63-70 (GPPGIGKT) contacts ATP.

Belongs to the activator 1 small subunits family. RfcL subfamily. In terms of assembly, heteromultimer composed of small subunits (RfcS) and large subunits (RfcL).

Functionally, part of the RFC clamp loader complex which loads the PCNA sliding clamp onto DNA. The polypeptide is Replication factor C large subunit (Pyrobaculum calidifontis (strain DSM 21063 / JCM 11548 / VA1)).